A 358-amino-acid polypeptide reads, in one-letter code: tRNA-specific 2-thiouridylase MnmA (358 aa).

ATP-binding positions include 22–29 and F48; that span reads LVSGGIDS. Catalysis depends on C105, which acts as the Nucleophile. C105 and C201 are oxidised to a cystine. G129 is an ATP binding site. Residues 151–153 form an interaction with tRNA region; the sequence is KEQ. The Cysteine persulfide intermediate role is filled by C201. The interval 306-307 is interaction with tRNA; that stretch reads RY.

The protein belongs to the MnmA/TRMU family.

It localises to the cytoplasm. The catalysed reaction is S-sulfanyl-L-cysteinyl-[protein] + uridine(34) in tRNA + AH2 + ATP = 2-thiouridine(34) in tRNA + L-cysteinyl-[protein] + A + AMP + diphosphate + H(+). Catalyzes the 2-thiolation of uridine at the wobble position (U34) of tRNA, leading to the formation of s(2)U34. In Desulfosudis oleivorans (strain DSM 6200 / JCM 39069 / Hxd3) (Desulfococcus oleovorans), this protein is tRNA-specific 2-thiouridylase MnmA.